A 344-amino-acid chain; its full sequence is MTHDLNDTLIFVKVVEQGSFIAAANSLGLPKTTVSRKVQELETRLGARLLHRTTRRIGLTEAGAVYHEHCQRIARELEEAESAVGQLQSGPRGWLRFTVPYSLGITWIAPLLGEFHAQYPEIQLDMHLGNEKLDLIGGEADLALRVGALPDSNLVARKLGSLRTQVFASPSYIERYGEPLHPDELQFHRTLALRKNRNVHNNRFFWSLSDGSDVREFPVNPLMVANDPAALNGAVLCGEGLLLTGDVMAKPFVQSGMVRRVLAGWTGPEVDFNAVFAGGRLVSPKVRAFVDFLVTRLNFDADYMMAQCPARLAAQRANGDAEVEVEVEAELRAEGKRILEKATA.

In terms of domain architecture, HTH lysR-type spans 3-60 (HDLNDTLIFVKVVEQGSFIAAANSLGLPKTTVSRKVQELETRLGARLLHRTTRRIGLT). The H-T-H motif DNA-binding region spans 20–39 (FIAAANSLGLPKTTVSRKVQ).

This sequence belongs to the LysR transcriptional regulatory family. In terms of assembly, interacts with the cyclic di-GMP effector XC_3703.

With respect to regulation, activity is regulated by cyclic di-GMP. Cyclic di-GMP specifically binds to XC_3703, which inhibits the interaction of the XC_2801-XC_3703 complex with DNA and prevents the transcription of the target genes. Transcriptional regulator that directly or indirectly regulates the expression of virulence-related genes, including flhB, aaeA, fliL and flgG. Binds to the promoter of the target genes only in the presence of XC_3703. The sequence is that of HTH-type transcriptional regulator XC_2801 from Xanthomonas campestris pv. campestris (strain 8004).